The sequence spans 294 residues: Formate dehydrogenase, nitrate-inducible, iron-sulfur subunit (294 aa).

At 1–256 (MAMETQDIIK…DTSVSLWKGA (256 aa)) the chain is on the periplasmic side. 4Fe-4S ferredoxin-type domains lie at 30–58 (VAKLIDVSTCIGCKACQVACSEWNDIRDE), 91–123 (LEWLIRKDGCMHCEDPGCLKACPSAGAIIQYAN), 124–153 (GIVDFQSENCIGCGYCIAGCPFNIPRLNKE), and 158–189 (YKCTLCVDRVSVGQEPACVKTCPTGAIHFGTK). Positions 39, 42, 45, 49, 100, 103, 108, 112, 133, 136, 139, 143, 160, 163, 175, and 179 each coordinate [4Fe-4S] cluster. A helical transmembrane segment spans residues 257 to 279 (LKPLAAAGFIATFAGLIFHYIGI). Residues 280 to 294 (GPNKEVDDDEEDHHE) lie on the Cytoplasmic side of the membrane.

As to quaternary structure, trimer of heterotrimers, consisting of subunits alpha, beta and gamma. [4Fe-4S] cluster serves as cofactor.

The protein localises to the cell inner membrane. Functionally, formate dehydrogenase allows E.coli to use formate as major electron donor during anaerobic respiration, when nitrate is used as electron acceptor. The beta subunit FdnH is an electron transfer unit containing 4 iron-sulfur clusters; it serves as a conduit for electrons that are transferred from the formate oxidation site in the alpha subunit (FdnG) to the menaquinone associated with the gamma subunit (FdnI) of formate dehydrogenase-N. Formate dehydrogenase-N is part of a system that generates proton motive force, together with the dissimilatory nitrate reductase (Nar). The chain is Formate dehydrogenase, nitrate-inducible, iron-sulfur subunit (fdnH) from Escherichia coli (strain K12).